A 483-amino-acid polypeptide reads, in one-letter code: tRNA sulfurtransferase (483 aa).

Residues 62 to 166 (PEICDALTRI…QDKLILVKAR (105 aa)) enclose the THUMP domain. ATP contacts are provided by residues 184–185 (LI), Lys-266, Gly-288, and Gln-297. A disulfide bridge connects residues Cys-345 and Cys-457. The Rhodanese domain occupies 405–483 (LADTDVLLDI…GYTNVKVYRP (79 aa)). Catalysis depends on Cys-457, which acts as the Cysteine persulfide intermediate.

It belongs to the ThiI family.

Its subcellular location is the cytoplasm. The enzyme catalyses [ThiI sulfur-carrier protein]-S-sulfanyl-L-cysteine + a uridine in tRNA + 2 reduced [2Fe-2S]-[ferredoxin] + ATP + H(+) = [ThiI sulfur-carrier protein]-L-cysteine + a 4-thiouridine in tRNA + 2 oxidized [2Fe-2S]-[ferredoxin] + AMP + diphosphate. The catalysed reaction is [ThiS sulfur-carrier protein]-C-terminal Gly-Gly-AMP + S-sulfanyl-L-cysteinyl-[cysteine desulfurase] + AH2 = [ThiS sulfur-carrier protein]-C-terminal-Gly-aminoethanethioate + L-cysteinyl-[cysteine desulfurase] + A + AMP + 2 H(+). The protein operates within cofactor biosynthesis; thiamine diphosphate biosynthesis. Its function is as follows. Catalyzes the ATP-dependent transfer of a sulfur to tRNA to produce 4-thiouridine in position 8 of tRNAs, which functions as a near-UV photosensor. Also catalyzes the transfer of sulfur to the sulfur carrier protein ThiS, forming ThiS-thiocarboxylate. This is a step in the synthesis of thiazole, in the thiamine biosynthesis pathway. The sulfur is donated as persulfide by IscS. The chain is tRNA sulfurtransferase from Yersinia pseudotuberculosis serotype O:1b (strain IP 31758).